The chain runs to 419 residues: RNA polymerase sigma factor sigD, chloroplastic (419 aa).

The N-terminal 52 residues, 1–52 (MATTIPTTATATMCPSPPVPTISPLLRTTHQCQPSPSLSSPFSIKLSTALVC), are a transit peptide targeting the chloroplast. The Polymerase core binding signature appears at 207–220 (DLIQEGSIGLLRGA). A DNA-binding region (H-T-H motif) is located at residues 377–396 (FEEIGKSLKLSRERVRQING).

This sequence belongs to the sigma-70 factor family. As to expression, mostly expressed in leaves, and to a lesser extent in roots. Present in seedlings.

It is found in the plastid. It localises to the chloroplast. Sigma factors are initiation factors that promote the attachment of plastid-encoded RNA polymerase (PEP) to specific initiation sites and are then released. Regulates transcription of the ndhF gene which codes for a subunit of the plastid NDH [NAD(P)H dehydrogenase] complex. The chain is RNA polymerase sigma factor sigD, chloroplastic (SIGD) from Arabidopsis thaliana (Mouse-ear cress).